The primary structure comprises 240 residues: UPF0502 protein Veis_2102 (240 aa).

The protein belongs to the UPF0502 family.

This chain is UPF0502 protein Veis_2102, found in Verminephrobacter eiseniae (strain EF01-2).